The sequence spans 293 residues: Mycothiol S-conjugate amidase (293 aa).

His13, Asp16, and His144 together coordinate Zn(2+).

Belongs to the MshB deacetylase family. Mca subfamily. Monomer. Zn(2+) is required as a cofactor.

It catalyses the reaction mycothiol S-conjugate + H2O = an N-acetyl-L-cysteine-S-conjugate + 1D-myo-inositol 2-amino-2-deoxy-alpha-D-glucopyranoside. In terms of biological role, a mycothiol (MSH, N-acetylcysteinyl-glucosaminyl-inositol) S-conjugate amidase, it recycles conjugated MSH to the N-acetyl cysteine conjugate (AcCys S-conjugate, a mercapturic acid) and the MSH precursor. Involved in MSH-dependent detoxification of a number of alkylating agents and antibiotics. This is Mycothiol S-conjugate amidase from Streptomyces coelicolor (strain ATCC BAA-471 / A3(2) / M145).